The following is a 546-amino-acid chain: Probable protein kinase UbiB (546 aa).

One can recognise a Protein kinase domain in the interval 124–502 (DFEIKPLASA…HVRQGQSRYF (379 aa)). Residues 130 to 138 (LASASIAQV) and Lys153 contribute to the ATP site. Asp288 acts as the Proton acceptor in catalysis. The next 2 helical transmembrane spans lie at 501–521 (YFLG…VSRP) and 522–542 (EWGL…FVGW).

Belongs to the ABC1 family. UbiB subfamily.

The protein resides in the cell inner membrane. Its pathway is cofactor biosynthesis; ubiquinone biosynthesis [regulation]. Is probably a protein kinase regulator of UbiI activity which is involved in aerobic coenzyme Q (ubiquinone) biosynthesis. This is Probable protein kinase UbiB from Escherichia coli O127:H6 (strain E2348/69 / EPEC).